Reading from the N-terminus, the 326-residue chain is Beta-ketoacyl-[acyl-carrier-protein] synthase III (326 aa).

Catalysis depends on residues Cys-115 and His-253. Positions Gln-254–Arg-258 are ACP-binding. Asn-283 is an active-site residue.

Belongs to the thiolase-like superfamily. FabH family. Homodimer.

Its subcellular location is the cytoplasm. It catalyses the reaction malonyl-[ACP] + acetyl-CoA + H(+) = 3-oxobutanoyl-[ACP] + CO2 + CoA. The protein operates within lipid metabolism; fatty acid biosynthesis. In terms of biological role, catalyzes the condensation reaction of fatty acid synthesis by the addition to an acyl acceptor of two carbons from malonyl-ACP. Catalyzes the first condensation reaction which initiates fatty acid synthesis and may therefore play a role in governing the total rate of fatty acid production. Possesses both acetoacetyl-ACP synthase and acetyl transacylase activities. Its substrate specificity determines the biosynthesis of branched-chain and/or straight-chain of fatty acids. The chain is Beta-ketoacyl-[acyl-carrier-protein] synthase III from Bradyrhizobium diazoefficiens (strain JCM 10833 / BCRC 13528 / IAM 13628 / NBRC 14792 / USDA 110).